A 218-amino-acid polypeptide reads, in one-letter code: Adenylate kinase (218 aa).

Residue 10–15 (GAGKGT) coordinates ATP. Positions 30–59 (STGDMLRAAVKAGSPLGLKVKDIMTSGGLV) are NMP. AMP is bound by residues threonine 31, arginine 36, 57 to 59 (GLV), 85 to 88 (GFPR), and glutamine 92. The segment at 122 to 159 (GRRVHEASGRVYHVKHNAPKTEGVDDETGEPLVQRDDD) is LID. Residues arginine 123 and 132–133 (VY) each bind ATP. Positions 156 and 167 each coordinate AMP. An ATP-binding site is contributed by glycine 203.

The protein belongs to the adenylate kinase family. In terms of assembly, monomer.

It localises to the cytoplasm. The catalysed reaction is AMP + ATP = 2 ADP. It participates in purine metabolism; AMP biosynthesis via salvage pathway; AMP from ADP: step 1/1. In terms of biological role, catalyzes the reversible transfer of the terminal phosphate group between ATP and AMP. Plays an important role in cellular energy homeostasis and in adenine nucleotide metabolism. The chain is Adenylate kinase from Saccharophagus degradans (strain 2-40 / ATCC 43961 / DSM 17024).